The sequence spans 435 residues: Trigger factor (435 aa).

Residues Asp161 to Pro246 enclose the PPIase FKBP-type domain.

The protein belongs to the FKBP-type PPIase family. Tig subfamily.

It localises to the cytoplasm. The catalysed reaction is [protein]-peptidylproline (omega=180) = [protein]-peptidylproline (omega=0). In terms of biological role, involved in protein export. Acts as a chaperone by maintaining the newly synthesized protein in an open conformation. Functions as a peptidyl-prolyl cis-trans isomerase. This chain is Trigger factor, found in Psychromonas ingrahamii (strain DSM 17664 / CCUG 51855 / 37).